A 530-amino-acid chain; its full sequence is Fusaric acid resistance protein FusA (530 aa).

Residues 1-23 (MQSPATKGTLALAVLAVSLIMAG) form the signal peptide. C24 carries the N-palmitoyl cysteine lipid modification. Residue C24 is the site of S-diacylglycerol cysteine attachment. 2 disordered regions span residues 375–442 (NAGV…RQRA) and 476–530 (GVET…PAAR). Low complexity-rich tracts occupy residues 421-430 (RPQLPAVARR) and 494-530 (AAGAAAPAAASGAKPVAAAARPAQVAAAGAAGVPAAR).

It belongs to the outer membrane factor (OMF) (TC 1.B.17) family.

It localises to the cell membrane. Functionally, involved in the resistance (detoxification) of the fungal toxin fusaric acid. The chain is Fusaric acid resistance protein FusA (fusA) from Burkholderia cepacia (Pseudomonas cepacia).